The primary structure comprises 781 residues: Mitochondrial inner membrane m-AAA protease component paraplegin (781 aa).

Residues 1–43 (MAAALLLLRALRQSPEPGPWRLWAQLSGRSPGLFSGAGGRRPY) constitute a mitochondrion transit peptide. The propeptide at 44–105 (VVRGTPIGLA…GSTLYFNTSG (62 aa)) is removed in mature form. A disordered region spans residues 105–134 (GLKQKNKDDDKPKGKAPEDDEEERRRKERE). The Mitochondrial matrix portion of the chain corresponds to 106 to 144 (LKQKNKDDDKPKGKAPEDDEEERRRKEREDQMYRERLRT). Residues 109–134 (KNKDDDKPKGKAPEDDEEERRRKERE) are compositionally biased toward basic and acidic residues. Residues 145–165 (LFIIAIVMSLLNSLSTSGGSI) form a helical membrane-spanning segment. Topologically, residues 166–248 (SWADFVNEML…DRIPVSYKRT (83 aa)) are mitochondrial intermembrane. Residues 249–269 (GFFGNALYALGMTAVGLAILW) traverse the membrane as a helical segment. Topologically, residues 270–781 (YVFRLAGMTG…ASGEEEAPAP (512 aa)) are mitochondrial matrix. Residues A312, G352, C353, G354, K355, T356, and L357 each contribute to the ATP site. The residue at position 505 (Y505) is a 3'-nitrotyrosine. H574 provides a ligand contact to Zn(2+). E575 is a catalytic residue. H578 and D650 together coordinate Zn(2+). The interval 701 to 781 (HEARLLVARA…ASGEEEAPAP (81 aa)) is interaction with PPIF.

This sequence in the N-terminal section; belongs to the AAA ATPase family. It in the C-terminal section; belongs to the peptidase M41 family. As to quaternary structure, forms heterooligomers with AFG3L2; the m-AAA protease is composed of heterohexamers of AFG3L2 and SPG7. Component of the mitochondrial permeability transition pore complex (mPTPC), at least composed of SPG7, VDAC1 and PPIF. Interacts with MAIP1. Requires Zn(2+) as cofactor. Upon import into the mitochondrion, the N-terminal transit peptide is cleaved by the mitochondrial-processing peptidase (MPP) to generate an intermediate form which undergoes a second proteolytic cleavage mediated by proteases AFG3L2 removing an additional N-terminal fragment to generate the proteolytically active mature form.

Its subcellular location is the mitochondrion inner membrane. The enzyme catalyses ATP + H2O = ADP + phosphate + H(+). In terms of biological role, catalytic component of the m-AAA protease, a protease that plays a key role in proteostasis of inner mitochondrial membrane proteins, and which is essential for axonal and neuron development. SPG7 possesses both ATPase and protease activities: the ATPase activity is required to unfold substrates, threading them into the internal proteolytic cavity for hydrolysis into small peptide fragments. The m-AAA protease exerts a dual role in the mitochondrial inner membrane: it mediates the processing of specific regulatory proteins and ensures protein quality control by degrading misfolded polypeptides. Mediates protein maturation of the mitochondrial ribosomal subunit MRPL32/bL32m by catalyzing the cleavage of the presequence of MRPL32/bL32m prior to assembly into the mitochondrial ribosome. Acts as a regulator of calcium in neurons by mediating degradation of SMDT1/EMRE before its assembly with the uniporter complex, limiting the availability of SMDT1/EMRE for MCU assembly and promoting efficient assembly of gatekeeper subunits with MCU. Also regulates mitochondrial calcium by catalyzing degradation of MCU. Plays a role in the formation and regulation of the mitochondrial permeability transition pore (mPTP) and its proteolytic activity is dispensable for this function. This chain is Mitochondrial inner membrane m-AAA protease component paraplegin (Spg7), found in Rattus norvegicus (Rat).